The chain runs to 69 residues: Cytochrome c oxidase subunit 8A, mitochondrial (69 aa).

The transit peptide at 1–25 (MSVLTPLLLRGLTGSARRLPMPCAR) directs the protein to the mitochondrion. An SIFI-degron motif is present at residues 2–19 (SVLTPLLLRGLTGSARRL). Residues 26–36 (VHSKPPREQLG) lie on the Mitochondrial matrix side of the membrane. Residues 37–60 (TMDIAIGLTSCFVCFLLPSGWVLS) traverse the membrane as a helical segment. At 61–69 (HLENYKKRE) the chain is on the mitochondrial intermembrane side.

The protein belongs to the cytochrome c oxidase VIII family. Component of the cytochrome c oxidase (complex IV, CIV), a multisubunit enzyme composed of 14 subunits. The complex is composed of a catalytic core of 3 subunits MT-CO1, MT-CO2 and MT-CO3, encoded in the mitochondrial DNA, and 11 supernumerary subunits COX4I, COX5A, COX5B, COX6A, COX6B, COX6C, COX7A, COX7B, COX7C, COX8 and NDUFA4, which are encoded in the nuclear genome. The complex exists as a monomer or a dimer and forms supercomplexes (SCs) in the inner mitochondrial membrane with NADH-ubiquinone oxidoreductase (complex I, CI) and ubiquinol-cytochrome c oxidoreductase (cytochrome b-c1 complex, complex III, CIII), resulting in different assemblies (supercomplex SCI(1)III(2)IV(1) and megacomplex MCI(2)III(2)IV(2)). Post-translationally, in response to mitochondrial stress, the precursor protein is ubiquitinated by the SIFI complex in the cytoplasm before mitochondrial import, leading to its degradation. Within the SIFI complex, UBR4 initiates ubiquitin chain that are further elongated or branched by KCMF1.

The protein localises to the mitochondrion inner membrane. It functions in the pathway energy metabolism; oxidative phosphorylation. Functionally, component of the cytochrome c oxidase, the last enzyme in the mitochondrial electron transport chain which drives oxidative phosphorylation. The respiratory chain contains 3 multisubunit complexes succinate dehydrogenase (complex II, CII), ubiquinol-cytochrome c oxidoreductase (cytochrome b-c1 complex, complex III, CIII) and cytochrome c oxidase (complex IV, CIV), that cooperate to transfer electrons derived from NADH and succinate to molecular oxygen, creating an electrochemical gradient over the inner membrane that drives transmembrane transport and the ATP synthase. Cytochrome c oxidase is the component of the respiratory chain that catalyzes the reduction of oxygen to water. Electrons originating from reduced cytochrome c in the intermembrane space (IMS) are transferred via the dinuclear copper A center (CU(A)) of subunit 2 and heme A of subunit 1 to the active site in subunit 1, a binuclear center (BNC) formed by heme A3 and copper B (CU(B)). The BNC reduces molecular oxygen to 2 water molecules using 4 electrons from cytochrome c in the IMS and 4 protons from the mitochondrial matrix. This chain is Cytochrome c oxidase subunit 8A, mitochondrial (COX8A), found in Nycticebus coucang (Slow loris).